Consider the following 342-residue polypeptide: Platelet-activating factor receptor (342 aa).

The Extracellular portion of the chain corresponds to 1 to 16 (MEPHDSSHMDSEFRYT). A helical membrane pass occupies residues 17–38 (LFPIVYSIIFVLGVIANGYVLW). Residues 39 to 54 (VFARLYPCKKFNEIKI) lie on the Cytoplasmic side of the membrane. The chain crosses the membrane as a helical span at residues 55-74 (FMVNLTMADMLFLITLPLWI). At 75–91 (VYYQNQGNWILPKFLCN) the chain is on the extracellular side. C90 and C173 are joined by a disulfide. Residues 92 to 113 (VAGCLFFINTYCSVAFLGVITY) traverse the membrane as a helical segment. Residues 114–133 (NRFQAVTRPIKTAQANTRKR) are Cytoplasmic-facing. A helical transmembrane segment spans residues 134 to 155 (GISLSLVIWVAIVGAASYFLIL). The Extracellular portion of the chain corresponds to 156–184 (DSTNTVPDSAGSGNVTRCFEHYEKGSVPV). N169 carries N-linked (GlcNAc...) asparagine glycosylation. A helical transmembrane segment spans residues 185–205 (LIIHIFIVFSFFLVFLIILFC). Residues 206–233 (NLVIIRTLLMQPVQQQRNAEVKRRALWM) lie on the Cytoplasmic side of the membrane. The chain crosses the membrane as a helical span at residues 234-254 (VCTVLAVFIICFVPHHVVQLP). The Extracellular segment spans residues 255–276 (WTLAELGFQDSKFHQAINDAHQ). Residues 277-296 (VTLCLLSTNCVLDPVIYCFL) traverse the membrane as a helical segment. The Cytoplasmic segment spans residues 297–342 (TKKFRKHLTEKFYSMRSSRKCSRATTDTVTEVVVPFNQIPGNSLKN).

The protein belongs to the G-protein coupled receptor 1 family. In terms of assembly, interacts with ARRB1. In terms of tissue distribution, expressed in the placenta, lung, left and right heart ventricles, heart atrium, leukocytes and differentiated HL-60 granulocytes.

The protein localises to the cell membrane. In terms of biological role, receptor for platelet activating factor, a chemotactic phospholipid mediator that possesses potent inflammatory, smooth-muscle contractile and hypotensive activity. Seems to mediate its action via a G protein that activates a phosphatidylinositol-calcium second messenger system. In Homo sapiens (Human), this protein is Platelet-activating factor receptor (PTAFR).